The primary structure comprises 383 residues: Podocin (383 aa).

A compositionally biased stretch (basic and acidic residues) spans 1-41 (MERRARSSSRESRGRGGRTPHKENKRAKAERSGGGRGRQEA). The interval 1-76 (MERRARSSSR…VDEVRGSGEE (76 aa)) is disordered. Over 1–102 (MERRARSSSR…TKSSGLGACE (102 aa)) the chain is Cytoplasmic. A lipid anchor (S-palmitoyl cysteine) is attached at C101. The stretch at 103–123 (WLLVLISLLFIIMTFPFSIWF) is an intramembrane region. Residues 124–383 (CVKVVQEYER…NPKKKDSPML (260 aa)) lie on the Cytoplasmic side of the membrane. N-linked (GlcNAc...) asparagine glycosylation occurs at Q287. Residues 355-383 (NRTQGSLPFPSPSKPVEPLNPKKKDSPML) form a disordered region. Basic and acidic residues predominate over residues 374-383 (NPKKKDSPML).

This sequence belongs to the band 7/mec-2 family. As to quaternary structure, interacts with nephrin/NPHS1 and KIRREL1. Interacts directly with CD2AP. Interacts with DDN. In terms of processing, glycosylated. Almost exclusively expressed in the podocytes of fetal and mature kidney glomeruli.

It is found in the cell membrane. It localises to the endoplasmic reticulum. Functionally, plays a role in the regulation of glomerular permeability, acting probably as a linker between the plasma membrane and the cytoskeleton. The chain is Podocin (NPHS2) from Homo sapiens (Human).